A 432-amino-acid chain; its full sequence is D-amino acid dehydrogenase (432 aa).

Val3–Trp17 is an FAD binding site.

It belongs to the DadA oxidoreductase family. The cofactor is FAD.

It carries out the reaction a D-alpha-amino acid + A + H2O = a 2-oxocarboxylate + AH2 + NH4(+). It participates in amino-acid degradation; D-alanine degradation; NH(3) and pyruvate from D-alanine: step 1/1. Functionally, oxidative deamination of D-amino acids. This chain is D-amino acid dehydrogenase, found in Shigella boydii serotype 18 (strain CDC 3083-94 / BS512).